A 404-amino-acid chain; its full sequence is CCA-adding enzyme (404 aa).

ATP is bound by residues G27 and R30. CTP-binding residues include G27 and R30. Residues D40 and D42 each contribute to the Mg(2+) site. 5 residues coordinate ATP: R111, D154, R157, R160, and R163. R111, D154, R157, R160, and R163 together coordinate CTP.

It belongs to the tRNA nucleotidyltransferase/poly(A) polymerase family. Bacterial CCA-adding enzyme type 3 subfamily. In terms of assembly, homodimer. The cofactor is Mg(2+).

It carries out the reaction a tRNA precursor + 2 CTP + ATP = a tRNA with a 3' CCA end + 3 diphosphate. The enzyme catalyses a tRNA with a 3' CCA end + 2 CTP + ATP = a tRNA with a 3' CCACCA end + 3 diphosphate. Functionally, catalyzes the addition and repair of the essential 3'-terminal CCA sequence in tRNAs without using a nucleic acid template. Adds these three nucleotides in the order of C, C, and A to the tRNA nucleotide-73, using CTP and ATP as substrates and producing inorganic pyrophosphate. tRNA 3'-terminal CCA addition is required both for tRNA processing and repair. Also involved in tRNA surveillance by mediating tandem CCA addition to generate a CCACCA at the 3' terminus of unstable tRNAs. While stable tRNAs receive only 3'-terminal CCA, unstable tRNAs are marked with CCACCA and rapidly degraded. This chain is CCA-adding enzyme, found in Geobacillus thermodenitrificans (strain NG80-2).